The chain runs to 752 residues: Endo-1,4-beta-xylanase 3 (752 aa).

Residues 1–22 (MEKNTNTNHTSDDNNDKNHTNE) form a disordered region. Residues 10–22 (TSDDNNDKNHTNE) show a composition bias toward basic and acidic residues. CBM-cenC domains lie at 26–163 (KIIL…EGPP) and 197–344 (NIVE…VQGP). One can recognise a GH10 domain in the interval 397–692 (FPYIVKVKQT…NEAGKRFLEV (296 aa)). Glu526 (proton donor) is an active-site residue. The active-site Nucleophile is the Glu627.

The protein belongs to the glycosyl hydrolase 10 (cellulase F) family. As to expression, confined to immature xylems.

It catalyses the reaction Endohydrolysis of (1-&gt;4)-beta-D-xylosidic linkages in xylans.. Its pathway is glycan degradation; xylan degradation. Binds to and hydrolyzes insoluble and soluble xylan substrates. The polypeptide is Endo-1,4-beta-xylanase 3 (Arabidopsis thaliana (Mouse-ear cress)).